We begin with the raw amino-acid sequence, 223 residues long: UPF0502 protein Sde_2426 (223 aa).

It belongs to the UPF0502 family.

The sequence is that of UPF0502 protein Sde_2426 from Saccharophagus degradans (strain 2-40 / ATCC 43961 / DSM 17024).